Reading from the N-terminus, the 310-residue chain is tRNA dimethylallyltransferase (310 aa).

G14–S21 contributes to the ATP binding site. T16–S21 contacts substrate. Interaction with substrate tRNA regions lie at residues D39–Q42 and Q163–R167.

It belongs to the IPP transferase family. As to quaternary structure, monomer. It depends on Mg(2+) as a cofactor.

The catalysed reaction is adenosine(37) in tRNA + dimethylallyl diphosphate = N(6)-dimethylallyladenosine(37) in tRNA + diphosphate. Functionally, catalyzes the transfer of a dimethylallyl group onto the adenine at position 37 in tRNAs that read codons beginning with uridine, leading to the formation of N6-(dimethylallyl)adenosine (i(6)A). This chain is tRNA dimethylallyltransferase, found in Brucella abortus (strain S19).